A 275-amino-acid polypeptide reads, in one-letter code: Pantothenate synthetase (275 aa).

26–33 (MGFLHEGH) lines the ATP pocket. Histidine 33 serves as the catalytic Proton donor. Glutamine 57 lines the (R)-pantoate pocket. Glutamine 57 contacts beta-alanine. An ATP-binding site is contributed by 143–146 (GQKD). Glutamine 149 provides a ligand contact to (R)-pantoate. ATP is bound by residues alanine 172 and 180–183 (RSSR).

The protein belongs to the pantothenate synthetase family. As to quaternary structure, homodimer.

It is found in the cytoplasm. It carries out the reaction (R)-pantoate + beta-alanine + ATP = (R)-pantothenate + AMP + diphosphate + H(+). It participates in cofactor biosynthesis; (R)-pantothenate biosynthesis; (R)-pantothenate from (R)-pantoate and beta-alanine: step 1/1. In terms of biological role, catalyzes the condensation of pantoate with beta-alanine in an ATP-dependent reaction via a pantoyl-adenylate intermediate. In Gluconobacter oxydans (strain 621H) (Gluconobacter suboxydans), this protein is Pantothenate synthetase.